The following is a 209-amino-acid chain: Thiamine-phosphate synthase (209 aa).

Residues 35–39 (QLRNK) and asparagine 67 each bind 4-amino-2-methyl-5-(diphosphooxymethyl)pyrimidine. Residues aspartate 68 and aspartate 87 each coordinate Mg(2+). 4-amino-2-methyl-5-(diphosphooxymethyl)pyrimidine is bound at residue serine 106. Residue 132-134 (TGS) coordinates 2-[(2R,5Z)-2-carboxy-4-methylthiazol-5(2H)-ylidene]ethyl phosphate. A 4-amino-2-methyl-5-(diphosphooxymethyl)pyrimidine-binding site is contributed by lysine 135. Residues glycine 163 and 183-184 (IS) each bind 2-[(2R,5Z)-2-carboxy-4-methylthiazol-5(2H)-ylidene]ethyl phosphate.

Belongs to the thiamine-phosphate synthase family. Mg(2+) serves as cofactor.

The catalysed reaction is 2-[(2R,5Z)-2-carboxy-4-methylthiazol-5(2H)-ylidene]ethyl phosphate + 4-amino-2-methyl-5-(diphosphooxymethyl)pyrimidine + 2 H(+) = thiamine phosphate + CO2 + diphosphate. It catalyses the reaction 2-(2-carboxy-4-methylthiazol-5-yl)ethyl phosphate + 4-amino-2-methyl-5-(diphosphooxymethyl)pyrimidine + 2 H(+) = thiamine phosphate + CO2 + diphosphate. It carries out the reaction 4-methyl-5-(2-phosphooxyethyl)-thiazole + 4-amino-2-methyl-5-(diphosphooxymethyl)pyrimidine + H(+) = thiamine phosphate + diphosphate. It functions in the pathway cofactor biosynthesis; thiamine diphosphate biosynthesis; thiamine phosphate from 4-amino-2-methyl-5-diphosphomethylpyrimidine and 4-methyl-5-(2-phosphoethyl)-thiazole: step 1/1. Its function is as follows. Condenses 4-methyl-5-(beta-hydroxyethyl)thiazole monophosphate (THZ-P) and 2-methyl-4-amino-5-hydroxymethyl pyrimidine pyrophosphate (HMP-PP) to form thiamine monophosphate (TMP). This Chlorobium phaeovibrioides (strain DSM 265 / 1930) (Prosthecochloris vibrioformis (strain DSM 265)) protein is Thiamine-phosphate synthase.